We begin with the raw amino-acid sequence, 158 residues long: MAEVGSKSVLFVCLGNICRSPIAEAVFRKLVTDEKVSDNWRIDSAATSTYEVGNPPDYRGQNCMRKHGIHMQHIARQITKEDFATFDYILCMDESNLRDLNRKSNQVKNCKAKIELLGSYDPQKQLIIEDPYYGNDSDFEVVYQQCLRCCKAFLEKTY.

Alanine 2 is subject to N-acetylalanine. Catalysis depends on cysteine 13, which acts as the Nucleophile. The active site involves arginine 19. Aspartate 130 acts as the Proton donor in catalysis. Tyrosine 132 and tyrosine 133 each carry phosphotyrosine.

Belongs to the low molecular weight phosphotyrosine protein phosphatase family. Interacts with EPHA2; dephosphorylates EPHA2. Interacts with EPHB1. As to quaternary structure, interacts with the SH3 domain of SPTAN1. There is no interaction observed for isoform 2. In terms of processing, phosphorylated by LCK. Phosphorylation at Tyr-132 increases its phosphatase activity. Widely expressed with highest levels in brain and liver and lowest levels in muscle.

It localises to the cytoplasm. It catalyses the reaction O-phospho-L-tyrosyl-[protein] + H2O = L-tyrosyl-[protein] + phosphate. The enzyme catalyses a phosphate monoester + H2O = an alcohol + phosphate. With respect to regulation, inhibited by sulfhydryl reagents. Functionally, acts on tyrosine phosphorylated proteins, low-MW aryl phosphates and natural and synthetic acyl phosphates with differences in substrate specificity between isoform 1 and isoform 2. This chain is Low molecular weight phosphotyrosine protein phosphatase, found in Mus musculus (Mouse).